A 289-amino-acid chain; its full sequence is Sphingomyelinase D (289 aa).

The first 22 residues, 1-22 (MQSISVLICVLLALSILNFTVA), serve as a signal peptide directing secretion. The active site involves His34. Mg(2+) contacts are provided by Glu54, Asp56, and Asp103. The SMD-tail signature appears at 282-289 (ATEDDAPW).

The protein belongs to the sphingomyelinase D/phospholipase D family. Mg(2+) serves as cofactor.

It is found in the secreted. The enzyme catalyses a sphingomyelin + H2O = an N-acylsphing-4-enine 1-phosphate + choline + H(+). With respect to regulation, sphingomyelinase activity is reduced by 33 percent following addition of EDTA. Catalyzes the hydrolysis of sphingomyelin. Sphingomyelinases D are produced by some spider in their venoms, but also by arthropods such as ticks, or pathogenic bacteria and fungi. They might play a role in pathogenicity through different mechanisms, such as membrane destabilization and host cell penetration, but also pulmonary inflammation and cutaneous lesions. This is Sphingomyelinase D from Aspergillus flavus (strain ATCC 200026 / FGSC A1120 / IAM 13836 / NRRL 3357 / JCM 12722 / SRRC 167).